The following is a 130-amino-acid chain: 3-aminoacrylate deaminase RutC (130 aa).

Belongs to the RutC family.

The enzyme catalyses (Z)-3-aminoacrylate + H2O + H(+) = 3-oxopropanoate + NH4(+). Involved in pyrimidine catabolism. Catalyzes the deamination of 3-aminoacrylate to malonic semialdehyde, a reaction that can also occur spontaneously. RutC may facilitate the reaction and modulate the metabolic fitness, rather than catalyzing essential functions. This chain is 3-aminoacrylate deaminase RutC, found in Variovorax paradoxus (strain S110).